Consider the following 553-residue polypeptide: MAPIDVGDFVPDGSISFFDDDDQLQTVSVHSLAAGKKVILFGVPGAFPPTCSMNHVNGFIEKAEELKSNGVDEIICLSGDDPFMITACSENKHVKFVEDGSGEYIQLLGLELEVKDKGLGVRSRGFALLLDNLKVIVVNVGSGGDCSLFQLMKMTTTTMSNLPTDLLEEIISRVPRKYMRAVRLTCKRWNGMFKSQSFTKMHIGKEEAATRELRQTRMIVMMDYNVYLMGIAVNEIPSIETLGKLTCLDDSEQVKISQVFCCEGLLLCILKDDDTKIVVWNPYLGQTRWIQTRLICCVSGWKKYALGYGNNSENRSCRSPKILRVTDNFNIFSENIPLQYEIYDFDSDVWTTLDVSPHWFIMSERGLSLKGNTYWGAKERHAYGSIDHIICFDFTRERFGPLLPLPFSAWGAQFASLSSVREDKITALFQNCRAYKLELWITTKIDVNNATWSKFFTMDTPYLHEILSLKTFFIDEENKIVVVSNKERDTKGDLTHDSIDIINGEARCLWKLGLGKPADKNCWPLVCPYVPSVVQIKQHKGGKTKEQSDYKRH.

Positions 4-160 (IDVGDFVPDG…LMKMTTTTMS (157 aa)) constitute a Thioredoxin domain. Cysteine 51 (cysteine sulfenic acid (-SOH) intermediate) is an active-site residue. The F-box domain maps to 156–201 (TTTMSNLPTDLLEEIISRVPRKYMRAVRLTCKRWNGMFKSQSFTKM).

The protein belongs to the peroxiredoxin family. Prx5 subfamily. Monomer.

The enzyme catalyses [glutaredoxin]-dithiol + a hydroperoxide = [glutaredoxin]-disulfide + an alcohol + H2O. Its function is as follows. Thiol-specific peroxidase that catalyzes the reduction of hydrogen peroxide and organic hydroperoxides to water and alcohols, respectively. Plays a role in cell protection against oxidative stress by detoxifying peroxides. May be involved in intracellular redox signaling. This chain is Peroxiredoxin-2A (PRXIIA), found in Arabidopsis thaliana (Mouse-ear cress).